A 75-amino-acid chain; its full sequence is MNPLEMQRKGPPRRWCLQVYPTAPKRQRPSRTGHDDDGGFVEKKRGKCGEKQERSDCYCVCVERSRHGRLHFVMC.

The interval 24–43 is disordered; sequence PKRQRPSRTGHDDDGGFVEK. A compositionally biased stretch (basic and acidic residues) spans 32 to 43; it reads TGHDDDGGFVEK.

The protein resides in the nucleus. May possess a function in tumorigenesis. The chain is Endogenous retrovirus group K member 7 Np9 protein (ERVK-7) from Homo sapiens (Human).